Reading from the N-terminus, the 290-residue chain is Signal recognition particle receptor subunit beta (290 aa).

Residues 44-64 (VLLLALFTLIFIIIISKLFGS) traverse the membrane as a helical segment. GTP contacts are provided by residues 92–100 (GLSNAGKTA), 114–117 (THTS), glycine 140, and alanine 268.

The protein belongs to the SRP receptor beta subunit family. In terms of assembly, heterodimer of an alpha and a beta chain.

Its subcellular location is the endoplasmic reticulum membrane. Functionally, component of the signal recognition particle (SRP) complex receptor (SR). Ensures, in conjunction with the SRP complex, the correct targeting of the nascent secretory proteins to the endoplasmic reticulum membrane system. May mediate the membrane association of SR. The polypeptide is Signal recognition particle receptor subunit beta (srprb) (Dictyostelium discoideum (Social amoeba)).